The following is a 161-amino-acid chain: Large ribosomal subunit protein uL15 (161 aa).

A disordered region spans residues 1-43; that stretch reads MKLSDIADNAGARKKRMRVGRGIGSGKGKTSGRGGKGQTARSG. The segment covering 21–37 has biased composition (gly residues); sequence RGIGSGKGKTSGRGGKG.

It belongs to the universal ribosomal protein uL15 family. Part of the 50S ribosomal subunit.

Its function is as follows. Binds to the 23S rRNA. This is Large ribosomal subunit protein uL15 from Bradyrhizobium sp. (strain BTAi1 / ATCC BAA-1182).